A 218-amino-acid polypeptide reads, in one-letter code: Probable GTP-binding protein EngB (218 aa).

The EngB-type G domain maps to 21–192 (NAPQIALAGR…WQELHRLAFP (172 aa)). GTP contacts are provided by residues 29-36 (GRSNVGKS), 56-60 (GKTRS), 75-78 (DLPG), 142-145 (TKAD), and 171-173 (FSS). Mg(2+) contacts are provided by Ser-36 and Thr-58. A disordered region spans residues 194–218 (MAFDTPSDGAPEPADEPEAASERAE).

Belongs to the TRAFAC class TrmE-Era-EngA-EngB-Septin-like GTPase superfamily. EngB GTPase family. Mg(2+) is required as a cofactor.

Functionally, necessary for normal cell division and for the maintenance of normal septation. In Oleidesulfovibrio alaskensis (strain ATCC BAA-1058 / DSM 17464 / G20) (Desulfovibrio alaskensis), this protein is Probable GTP-binding protein EngB.